The following is a 276-amino-acid chain: Diaminopimelate epimerase (276 aa).

Substrate-binding residues include N13, Q46, and N66. Catalysis depends on C75, which acts as the Proton donor. Residues 76 to 77, N159, N192, and 210 to 211 each bind substrate; these read GN and ER. C219 functions as the Proton acceptor in the catalytic mechanism. 220–221 lines the substrate pocket; the sequence is GT.

This sequence belongs to the diaminopimelate epimerase family. As to quaternary structure, homodimer.

It is found in the cytoplasm. It catalyses the reaction (2S,6S)-2,6-diaminopimelate = meso-2,6-diaminopimelate. Its pathway is amino-acid biosynthesis; L-lysine biosynthesis via DAP pathway; DL-2,6-diaminopimelate from LL-2,6-diaminopimelate: step 1/1. Catalyzes the stereoinversion of LL-2,6-diaminopimelate (L,L-DAP) to meso-diaminopimelate (meso-DAP), a precursor of L-lysine and an essential component of the bacterial peptidoglycan. In Hahella chejuensis (strain KCTC 2396), this protein is Diaminopimelate epimerase.